The chain runs to 204 residues: ATP synthase subunit b 2 (204 aa).

The segment at 8–28 is disordered; the sequence is AQSSTTEGAEAHDAAAAGEVH. Residues 56–76 traverse the membrane as a helical segment; that stretch reads LLWLAITFGLFYLLMSKVIIP.

Belongs to the ATPase B chain family. As to quaternary structure, F-type ATPases have 2 components, F(1) - the catalytic core - and F(0) - the membrane proton channel. F(1) has five subunits: alpha(3), beta(3), gamma(1), delta(1), epsilon(1). F(0) has three main subunits: a(1), b(2) and c(10-14). The alpha and beta chains form an alternating ring which encloses part of the gamma chain. F(1) is attached to F(0) by a central stalk formed by the gamma and epsilon chains, while a peripheral stalk is formed by the delta and b chains.

It localises to the cell inner membrane. F(1)F(0) ATP synthase produces ATP from ADP in the presence of a proton or sodium gradient. F-type ATPases consist of two structural domains, F(1) containing the extramembraneous catalytic core and F(0) containing the membrane proton channel, linked together by a central stalk and a peripheral stalk. During catalysis, ATP synthesis in the catalytic domain of F(1) is coupled via a rotary mechanism of the central stalk subunits to proton translocation. Functionally, component of the F(0) channel, it forms part of the peripheral stalk, linking F(1) to F(0). The b'-subunit is a diverged and duplicated form of b found in plants and photosynthetic bacteria. The polypeptide is ATP synthase subunit b 2 (atpF2) (Rhizobium meliloti (strain 1021) (Ensifer meliloti)).